The primary structure comprises 320 residues: Cytochrome f (320 aa).

The N-terminal stretch at Met1–Ala35 is a signal peptide. Residues Tyr36, Cys56, Cys59, and His60 each contribute to the heme site. Residues Val286–Lys306 form a helical membrane-spanning segment.

It belongs to the cytochrome f family. In terms of assembly, the 4 large subunits of the cytochrome b6-f complex are cytochrome b6, subunit IV (17 kDa polypeptide, petD), cytochrome f and the Rieske protein, while the 4 small subunits are PetG, PetL, PetM and PetN. The complex functions as a dimer. Heme is required as a cofactor.

It localises to the plastid. It is found in the chloroplast thylakoid membrane. In terms of biological role, component of the cytochrome b6-f complex, which mediates electron transfer between photosystem II (PSII) and photosystem I (PSI), cyclic electron flow around PSI, and state transitions. This is Cytochrome f from Hordeum vulgare (Barley).